Here is a 118-residue protein sequence, read N- to C-terminus: Protein Rev (118 aa).

Residues S5 and S8 each carry the phosphoserine; by host CK2 modification. Residues 18–28 (LIKFLYQSSSD) are homomultimerization. The tract at residues 23–52 (YQSSSDPPPNPGGTRQARRNRRRRWRERQR) is disordered. Residues 36-52 (TRQARRNRRRRWRERQR) carry the Nuclear localization signal and RNA-binding (RRE) motif. The span at 38 to 49 (QARRNRRRRWRE) shows a compositional bias: basic residues. Positions 75–86 (LQLPPLERLTLD) match the Nuclear export signal and binding to XPO1 motif. The segment at 92-118 (GTSGTQGVGSPQILVESPTVLESGTKE) is disordered. Phosphoserine; by host is present on residues S94 and S101.

This sequence belongs to the HIV-1 REV protein family. Homomultimer; when bound to the RRE. Multimeric assembly is essential for activity and may involve XPO1. Binds to human KPNB1, XPO1, TNPO1, RANBP5 and IPO7. Interacts with the viral Integrase. Interacts with human KHDRBS1. Interacts with human NAP1; this interaction decreases Rev multimerization and stimulates its activity. Interacts with human DEAD-box helicases DDX3 and DDX24; these interactions may serve for viral RNA export to the cytoplasm and packaging, respectively. Interacts with human PSIP1; this interaction may inhibit HIV-1 DNA integration by promoting dissociation of the Integrase-LEDGF/p75 complex. Asymmetrically arginine dimethylated at one site by host PRMT6. Methylation impairs the RNA-binding activity and export of viral RNA from the nucleus to the cytoplasm. Post-translationally, phosphorylated by protein kinase CK2. Presence of, and maybe binding to the N-terminus of the regulatory beta subunit of CK2 is necessary for CK2-mediated Rev's phosphorylation.

Its subcellular location is the host nucleus. The protein resides in the host nucleolus. It is found in the host cytoplasm. Escorts unspliced or incompletely spliced viral pre-mRNAs (late transcripts) out of the nucleus of infected cells. These pre-mRNAs carry a recognition sequence called Rev responsive element (RRE) located in the env gene, that is not present in fully spliced viral mRNAs (early transcripts). This function is essential since most viral proteins are translated from unspliced or partially spliced pre-mRNAs which cannot exit the nucleus by the pathway used by fully processed cellular mRNAs. Rev itself is translated from a fully spliced mRNA that readily exits the nucleus. Rev's nuclear localization signal (NLS) binds directly to KPNB1/Importin beta-1 without previous binding to KPNA1/Importin alpha-1. KPNB1 binds to the GDP bound form of RAN (Ran-GDP) and targets Rev to the nucleus. In the nucleus, the conversion from Ran-GDP to Ran-GTP dissociates Rev from KPNB1 and allows Rev's binding to the RRE in viral pre-mRNAs. Rev multimerization on the RRE via cooperative assembly exposes its nuclear export signal (NES) to the surface. Rev can then form a complex with XPO1/CRM1 and Ran-GTP, leading to nuclear export of the complex. Conversion from Ran-GTP to Ran-GDP mediates dissociation of the Rev/RRE/XPO1/RAN complex, so that Rev can return to the nucleus for a subsequent round of export. Beside KPNB1, also seems to interact with TNPO1/Transportin-1, RANBP5/IPO5 and IPO7/RANBP7 for nuclear import. The nucleoporin-like HRB/RIP is an essential cofactor that probably indirectly interacts with Rev to release HIV RNAs from the perinuclear region to the cytoplasm. The polypeptide is Protein Rev (Human immunodeficiency virus type 1 group M subtype B (isolate LW123) (HIV-1)).